We begin with the raw amino-acid sequence, 481 residues long: E3 ubiquitin-protein ligase makorin-1 (481 aa).

3 C3H1-type zinc fingers span residues 55-82 (WTKQ…HDLS), 84-111 (SPYG…HSKP), and 208-235 (ETKK…HGDS). The makorin-type Cys-His stretch occupies residues 236-263 (CDMCGLQVLHPVDAAQRSQHIKSCIEAH). Residues 281–335 (CGICMEVVYEKANPSERRFGILSNCNHTYCLKCIRKWRSAKQFESKIIKSCPECR) form an RING-type zinc finger. The segment at 364–393 (AMSNKACRYFDEGRGSCPFGGNCFYKHAYP) adopts a C3H1-type 4 zinc-finger fold.

In terms of assembly, interacts with p53/TP53 and CDKN1A. Interacts with TERT, modulating telomere length homeostasis. Auto-ubiquitinated; which leads to proteasomal degradation. In terms of tissue distribution, highly expressed in embryo, in specific cell types of the central nervous system, in brain with the strongest levels of expression in the mantle layers and in testis. Moderate to low levels in somatic tissues.

It carries out the reaction S-ubiquitinyl-[E2 ubiquitin-conjugating enzyme]-L-cysteine + [acceptor protein]-L-lysine = [E2 ubiquitin-conjugating enzyme]-L-cysteine + N(6)-ubiquitinyl-[acceptor protein]-L-lysine.. It participates in protein modification; protein ubiquitination. Its function is as follows. E3 ubiquitin ligase catalyzing the covalent attachment of ubiquitin moieties onto substrate proteins. These substrates include FILIP1, p53/TP53, CDKN1A and TERT. Keeps cells alive by suppressing p53/TP53 under normal conditions, but stimulates apoptosis by repressing CDKN1A under stress conditions. Acts as a negative regulator of telomerase. Has negative and positive effects on RNA polymerase II-dependent transcription. In Mus musculus (Mouse), this protein is E3 ubiquitin-protein ligase makorin-1 (Mkrn1).